Consider the following 324-residue polypeptide: Cytochrome c biogenesis protein CcsA (324 aa).

8 helical membrane-spanning segments follow: residues 17–37, 44–64, 68–88, 99–119, 145–165, 230–250, 264–278, and 291–311; these read IISVVIIIQLMTFFVHEIPAL, GMIATFLSITGLLIIRWIYSG, LSNLYESLMFLSWSFAIIHMI, YLSAITIPSAIFTQAFATSGL, MLLSYAALLVGSLFSIALLVI, VISIGFSFLTIGILSGAVWAN, TWAFITWTIYAIYSH, and AIVASIGFFIIWICYFGVNLL.

It belongs to the CcmF/CycK/Ccl1/NrfE/CcsA family. May interact with Ccs1.

Its subcellular location is the plastid. It localises to the chloroplast thylakoid membrane. In terms of biological role, required during biogenesis of c-type cytochromes (cytochrome c6 and cytochrome f) at the step of heme attachment. This is Cytochrome c biogenesis protein CcsA from Lemna minor (Common duckweed).